The primary structure comprises 180 residues: MALICIGSVCFSLFHIGVIILLIINYFSSHIKKIFPSFFKNPNKEEIDKHIGNILEAKRKNKQLEQSIYIELKNTGSLNQVFSSTQNSSIVIKFGAVWCKPCNKIKEYFKNQLNYYYVTLVDIDVDIHPKLNDQHNIKALPTFEFYFNLNNEWVLVHTVEGANQNDIEKAFQKYCLEKAK.

Residues 1–3 (MAL) lie on the Cytoplasmic side of the membrane. A helical; Signal-anchor for type II membrane protein membrane pass occupies residues 4-24 (ICIGSVCFSLFHIGVIILLII). Residues 25-180 (NYFSSHIKKI…FQKYCLEKAK (156 aa)) are Lumenal-facing. The Thioredoxin domain occupies 29 to 176 (SHIKKIFPSF…IEKAFQKYCL (148 aa)). Residues cysteine 99 and cysteine 102 each act as nucleophile in the active site. An intrachain disulfide couples cysteine 99 to cysteine 102.

The protein belongs to the thioredoxin family. The disulfide bond between Cys-99 and Cys-102 acts as a redox-active center and is reduced by thioredoxin reductase TRXR.

The protein localises to the endoplasmic reticulum membrane. Functionally, participates in various redox reactions through the reversible oxidation of its active center dithiol to a disulfide and catalyzes dithiol-disulfide exchange reactions. This is Thioredoxin 3 from Plasmodium falciparum (isolate 3D7).